A 333-amino-acid chain; its full sequence is Phosphate acyltransferase (333 aa).

The protein belongs to the PlsX family. Homodimer. Probably interacts with PlsY.

Its subcellular location is the cytoplasm. The enzyme catalyses a fatty acyl-[ACP] + phosphate = an acyl phosphate + holo-[ACP]. It participates in lipid metabolism; phospholipid metabolism. Catalyzes the reversible formation of acyl-phosphate (acyl-PO(4)) from acyl-[acyl-carrier-protein] (acyl-ACP). This enzyme utilizes acyl-ACP as fatty acyl donor, but not acyl-CoA. The chain is Phosphate acyltransferase from Lactobacillus gasseri (strain ATCC 33323 / DSM 20243 / BCRC 14619 / CIP 102991 / JCM 1131 / KCTC 3163 / NCIMB 11718 / NCTC 13722 / AM63).